A 498-amino-acid polypeptide reads, in one-letter code: NADH-quinone oxidoreductase subunit N (498 aa).

Helical transmembrane passes span 10–30, 44–64, 68–88, 109–129, 130–150, 164–184, 207–227, 239–259, 273–293, 301–321, 328–348, 377–397, 412–434, and 458–478; these read LMPL…MLLI, VVGL…GKFV, VMGM…ILVA, ELYL…ASSH, YASF…LLAY, YLVL…YIYA, VLLG…LAPF, PAPM…GLFV, LVTV…LLAV, ILGY…ISMT, VTVY…AVAL, ATLT…GFIG, FLAA…VMVV, and LMVL…DPMI.

The protein belongs to the complex I subunit 2 family. As to quaternary structure, NDH-1 is composed of 14 different subunits. Subunits NuoA, H, J, K, L, M, N constitute the membrane sector of the complex.

It is found in the cell inner membrane. The catalysed reaction is a quinone + NADH + 5 H(+)(in) = a quinol + NAD(+) + 4 H(+)(out). Its function is as follows. NDH-1 shuttles electrons from NADH, via FMN and iron-sulfur (Fe-S) centers, to quinones in the respiratory chain. The immediate electron acceptor for the enzyme in this species is believed to be ubiquinone. Couples the redox reaction to proton translocation (for every two electrons transferred, four hydrogen ions are translocated across the cytoplasmic membrane), and thus conserves the redox energy in a proton gradient. The polypeptide is NADH-quinone oxidoreductase subunit N (Acinetobacter baumannii (strain AB0057)).